The sequence spans 204 residues: Ribosomal RNA small subunit methyltransferase J (204 aa).

Residues 55 to 56 (RD), 71 to 72 (ER), and Asp-123 contribute to the S-adenosyl-L-methionine site.

This sequence belongs to the methyltransferase superfamily. RsmJ family.

The protein localises to the cytoplasm. It catalyses the reaction guanosine(1516) in 16S rRNA + S-adenosyl-L-methionine = N(2)-methylguanosine(1516) in 16S rRNA + S-adenosyl-L-homocysteine + H(+). Specifically methylates the guanosine in position 1516 of 16S rRNA. In Rhodopseudomonas palustris (strain ATCC BAA-98 / CGA009), this protein is Ribosomal RNA small subunit methyltransferase J.